A 186-amino-acid chain; its full sequence is MAQSGSMISGVAGRYARSLFELAQETGAVSVVEGDLVRFEEMLEGSEDLKRLIKSPVFSADEQLKALGAVLDRARISGLVGNFLRLVARNRRLFAVPQMIRAFREIAAEARGETAAEVTSAHALSAEQERELKAALKSVVGKDVTVKVTVDPSLLAGLIVKVGSRQIDTSLKTKLNSLKLALKEVG.

Belongs to the ATPase delta chain family. In terms of assembly, F-type ATPases have 2 components, F(1) - the catalytic core - and F(0) - the membrane proton channel. F(1) has five subunits: alpha(3), beta(3), gamma(1), delta(1), epsilon(1). F(0) has three main subunits: a(1), b(2) and c(10-14). The alpha and beta chains form an alternating ring which encloses part of the gamma chain. F(1) is attached to F(0) by a central stalk formed by the gamma and epsilon chains, while a peripheral stalk is formed by the delta and b chains.

Its subcellular location is the cell inner membrane. In terms of biological role, f(1)F(0) ATP synthase produces ATP from ADP in the presence of a proton or sodium gradient. F-type ATPases consist of two structural domains, F(1) containing the extramembraneous catalytic core and F(0) containing the membrane proton channel, linked together by a central stalk and a peripheral stalk. During catalysis, ATP synthesis in the catalytic domain of F(1) is coupled via a rotary mechanism of the central stalk subunits to proton translocation. Its function is as follows. This protein is part of the stalk that links CF(0) to CF(1). It either transmits conformational changes from CF(0) to CF(1) or is implicated in proton conduction. The chain is ATP synthase subunit delta from Chelativorans sp. (strain BNC1).